We begin with the raw amino-acid sequence, 389 residues long: Dual-specificity RNA methyltransferase RlmN (389 aa).

Glutamate 110 (proton acceptor) is an active-site residue. The Radical SAM core domain maps to 116-355 (EKDRATLCVS…TIVRKTRGDD (240 aa)). A disulfide bridge links cysteine 123 with cysteine 360. The [4Fe-4S] cluster site is built by cysteine 130, cysteine 134, and cysteine 137. S-adenosyl-L-methionine is bound by residues 184–185 (GE), serine 216, 238–240 (SLH), and asparagine 317. The active-site S-methylcysteine intermediate is cysteine 360.

It belongs to the radical SAM superfamily. RlmN family. [4Fe-4S] cluster serves as cofactor.

The protein localises to the cytoplasm. The catalysed reaction is adenosine(2503) in 23S rRNA + 2 reduced [2Fe-2S]-[ferredoxin] + 2 S-adenosyl-L-methionine = 2-methyladenosine(2503) in 23S rRNA + 5'-deoxyadenosine + L-methionine + 2 oxidized [2Fe-2S]-[ferredoxin] + S-adenosyl-L-homocysteine. It carries out the reaction adenosine(37) in tRNA + 2 reduced [2Fe-2S]-[ferredoxin] + 2 S-adenosyl-L-methionine = 2-methyladenosine(37) in tRNA + 5'-deoxyadenosine + L-methionine + 2 oxidized [2Fe-2S]-[ferredoxin] + S-adenosyl-L-homocysteine. Specifically methylates position 2 of adenine 2503 in 23S rRNA and position 2 of adenine 37 in tRNAs. m2A2503 modification seems to play a crucial role in the proofreading step occurring at the peptidyl transferase center and thus would serve to optimize ribosomal fidelity. This chain is Dual-specificity RNA methyltransferase RlmN, found in Erwinia tasmaniensis (strain DSM 17950 / CFBP 7177 / CIP 109463 / NCPPB 4357 / Et1/99).